The chain runs to 199 residues: Pre T-cell antigen receptor alpha (199 aa).

The N-terminal stretch at 1 to 16 (MARTWLLLLLGVRCQA) is a signal peptide. Residues 17–146 (LPSGIAGTPF…PEPLGGTQRQ (130 aa)) lie on the Extracellular side of the membrane. Cysteine 47 and cysteine 107 are joined by a disulfide. N-linked (GlcNAc...) asparagine glycosylation is found at asparagine 67 and asparagine 117. Residues 147–167 (VLWLSLLRLLLFKLLLLDVLL) traverse the membrane as a helical segment. The Cytoplasmic portion of the chain corresponds to 168-199 (TCSHLRLHVLAGQHLQPPPSRKSLPPTHRIWT).

Heterodimer with TCRB; disulfide linked. This heterodimer assembles with CD3 proteins into a signaling-competent pre-T-cell receptor complex. Interacts with RHBDD1. As to expression, isoform 1 is expressed at higher levels than isoform 2 in the thymus while only isoform 2 is expressed in polyclonal beta-only cells. Isoform 1 shows a predominant expression in immature thymocytes.

The protein localises to the membrane. It localises to the cell membrane. Component of the pre-T-cell receptor complex (composed of PTCRA, TCRB and the CD3 complex) that plays a crucial role in early T-cell development, particularly alpha-beta T cell differentiation. Isoform 1 acts to retain most TCRB intracellularly, while isoform 2 permits higher levels of cell surface TCRB expression and facilitates signaling from the CD3-TCRB complex. The chain is Pre T-cell antigen receptor alpha from Mus musculus (Mouse).